The primary structure comprises 707 residues: uncharacterized protein (707 aa).

2 disordered regions span residues 15–122 (ALAK…LESY) and 667–707 (ESVQ…DIDE). Basic and acidic residues-rich tracts occupy residues 18-32 (KKNDKIKKKDTDKGI) and 40-52 (EGKDETLKRDVEK). Serine 112 is subject to Phosphoserine. Positions 659-700 (EEQRKLIRESVQQDQEHKEQMRQKKKQALKSDDIELDDLSEE) form a coiled coil. A compositionally biased stretch (acidic residues) spans 692–707 (IELDDLSEEEAEDIDE).

The protein belongs to the NOC2 family.

It is found in the nucleus. The protein localises to the nucleolus. This is an uncharacterized protein from Schizosaccharomyces pombe (strain 972 / ATCC 24843) (Fission yeast).